A 194-amino-acid polypeptide reads, in one-letter code: Large ribosomal subunit protein eL15 (194 aa).

The tract at residues 160–194 (RGLTSAGKKGRGLMYKGKGAEKVRPSVRANSKKAK) is disordered.

It belongs to the eukaryotic ribosomal protein eL15 family.

The chain is Large ribosomal subunit protein eL15 from Methanococcus maripaludis (strain C6 / ATCC BAA-1332).